The chain runs to 152 residues: Large ribosomal subunit protein uL30 (152 aa).

It belongs to the universal ribosomal protein uL30 family. As to quaternary structure, part of the 50S ribosomal subunit.

The sequence is that of Large ribosomal subunit protein uL30 from Methanobrevibacter smithii (strain ATCC 35061 / DSM 861 / OCM 144 / PS).